A 654-amino-acid chain; its full sequence is MKLSLVAAMLLLLSAARAEEEDKKEDVGTVVGIDLGTTYSCVGVFKNGRVEIIANDQGNRITPSYVAFTPEGERLIGDAAKNQLTSNPENTVFDAKRLIGRTWNDPSVQQDIKFLPFKVVEKKTKPYIQVDIGGGQTKTFAPEEISAMVLTKMKETAEAYLGKKVTHAVVTVPAYFNDAQRQATKDAGTIAGLNVMRIINEPTAAAIAYGLDKREGEKNILVFDLGGGTFDVSLLTIDNGVFEVVATNGDTHLGGEDFDQRVMEHFIKLYKKKTGKDVRKDNRAVQKLRREVEKAKRALSSQHQARIEIESFYEGEDFSETLTRAKFEELNMDLFRSTMKPVQKVLEDSDLKKSDIDEIVLVGGSTRIPKIQQLVKEFFNGKEPSRGINPDEAVAYGAAVQAGVLSGDQDTGDLVLLDVCPLTLGIETVGGVMTKLIPRNTVVPTKKSQIFSTASDNQPTVTIKVYEGERPLTKDNHLLGTFDLTGIPPAPRGVPQIEVTFEIDVNGILRVTAEDKGTGNKNKITITNDQNRLTPEEIERMVNDAEKFAEEDKKLKERIDTRNELESYAYSLKNQIGDKEKLGGKLSSEDKETMEKAVEEKIEWLESHQDADIEDFKAKKKELEEIVQPIISKLYGSAGPPPTGEEDTAEKDEL.

The first 18 residues, M1–A18, serve as a signal peptide directing secretion. The required for interaction with ELAPOR1 stretch occupies residues M1 to A80. G36–Y39 provides a ligand contact to ATP. S86 carries the post-translational modification Phosphoserine. K96 contributes to the ATP binding site. K125 is modified (N6-acetyllysine). The interval K125 to K280 is nucleotide-binding (NBD). Position 160 is a 3'-nitrotyrosine (Y160). K213 is modified (N6-acetyllysine). G227–T229 lines the ATP pocket. At K271 the chain carries N6-acetyllysine. E293–S300 lines the ATP pocket. Residue K326 is modified to N6-acetyllysine. K352 is covalently cross-linked (Glycyl lysine isopeptide (Lys-Gly) (interchain with G-Cter in SUMO2)). Residue K353 is modified to N6-acetyllysine; alternate. K353 is covalently cross-linked (Glycyl lysine isopeptide (Lys-Gly) (interchain with G-Cter in SUMO1); alternate). An ATP-binding site is contributed by G364–R367. Positions Q409–V419 are interdomain linker. A substrate-binding (SBD) region spans residues C420–T500. At K447 the chain carries N6-succinyllysine. An Omega-N-methylarginine modification is found at R492. T518 bears the O-AMP-threonine; alternate mark. T518 carries the post-translational modification Phosphothreonine; alternate. The residue at position 585 (K585) is an N6,N6,N6-trimethyllysine; by METTL21A; in vitro. At K585 the chain carries N6,N6-dimethyllysine; alternate. An N6-methyllysine; alternate modification is found at K585. K591 carries the N6-methyllysine modification. A disordered region spans residues K633 to L654. Phosphothreonine is present on residues T643 and T648. Acidic residues predominate over residues G644–L654. The short motif at K651–L654 is the Prevents secretion from ER element.

This sequence belongs to the heat shock protein 70 family. As to quaternary structure, monomer and homooligomer; homooligomerization via the interdomain linker inactivates the chaperone activity and acts as a storage of HSPA5/BiP molecules. Interacts with DNAJC1 (via J domain). Component of an EIF2 complex at least composed of CELF1/CUGBP1, CALR, CALR3, EIF2S1, EIF2S2, HSP90B1 and HSPA5. Part of a large chaperone multiprotein complex comprising DNAJB11, HSP90B1, HSPA5, HYOU, PDIA2, PDIA4, PDIA6, PPIB, SDF2L1, UGGT1 and very small amounts of ERP29, but not, or at very low levels, CALR nor CANX. Interacts with TMEM132A and TRIM21. May form a complex with ERLEC1, OS9, SEL1L and SYVN1. Interacts with DNAJC10. Interacts with DNAJB9/ERdj4; leading to recruit HSPA5/BiP to ERN1/IRE1. Interacts with ERN1/IRE1 (via luminal domain); the interaction takes place following interaction with DNAJB9/ERdj4 and leads to inactivate ERN1/IRE1, the interaction also competitively inhibits ERN1 interaction with MANF. Interacts directly with MANF (via SAP domain); the interaction inhibits ATP binding to HSPA5/BiP and subsequent nucleotide exchange. Interacts with EIF2AK3/PERK (via luminal domain); interaction leads to inactivate EIF2AK3/PERK. Interacts with MX1. Interacts with METTL23. Interacts with CEMIP; the interaction induces calcium leakage from the endoplasmic reticulum and cell migration. Interacts with PCSK4 form; the interaction takes place in the endoplasmic reticulum. Interacts with CIPC. Interacts with CCDC88B (via C-terminus); the interaction opposes ERN1-mediated JNK activation, protecting against apoptosis. Interacts with INPP5K; necessary for INPP5K localization at the endoplasmic reticulum. Interacts with MANF; the interaction is direct. Interacts with LOXL2; leading to activate the ERN1/IRE1-XBP1 pathway of the unfolded protein response. Interacts with CLU under stressed condition; interaction increases CLU protein stability; facilitates its retrotranslocation and redistribution to the mitochondria; cooperatively suppress stress-induced apoptosis by stabilizing mitochondrial membrane integrity. Interacts with CCDC47. Interacts with CLN3. Interacts with ELAPOR1; may regulate the function of HSPA5 in apoptosis and cell proliferation. Interacts with CASP7. Interacts with ILDR2; the interaction stabilizes ILDR2 expression. Interacts with ADAM7. In terms of assembly, (Microbial infection) Interacts with Japanese encephalitis virus envelope protein E. (Microbial infection) Interacts with R.delemar invasin CotH3 on the surface of nasal epithelial cells. Interacts with R.delemar invasin CotH2. As to quaternary structure, (Microbial infection) Interacts with Zika virus envelope protein E and non-structural protein 1 in a chaperone-client manner. AMPylated by FICD. In unstressed cells, AMPylation at Thr-518 by FICD inactivates the chaperome activity: AMPylated form is locked in a relatively inert state and only weakly stimulated by J domain-containing proteins. In response to endoplasmic reticulum stress, de-AMPylation by the same protein, FICD, restores the chaperone activity.

Its subcellular location is the endoplasmic reticulum lumen. It localises to the melanosome. It is found in the cytoplasm. The protein localises to the cell surface. The enzyme catalyses ATP + H2O = ADP + phosphate + H(+). With respect to regulation, the chaperone activity is regulated by ATP-induced allosteric coupling of the nucleotide-binding (NBD) and substrate-binding (SBD) domains. In the ADP-bound and nucleotide-free (apo) states, the two domains have little interaction. In contrast, in the ATP-bound state the two domains are tightly coupled, which results in drastically accelerated kinetics in both binding and release of polypeptide substrates. J domain-containing co-chaperones (DNAJB9/ERdj4 or DNAJC10/ERdj5) stimulate the ATPase activity and are required for efficient substrate recognition by HSPA5/BiP. Homooligomerization inactivates participating HSPA5/BiP protomers and probably act as reservoirs to store HSPA5/BiP molecules when they are not needed by the cell. Endoplasmic reticulum chaperone that plays a key role in protein folding and quality control in the endoplasmic reticulum lumen. Involved in the correct folding of proteins and degradation of misfolded proteins via its interaction with DNAJC10/ERdj5, probably to facilitate the release of DNAJC10/ERdj5 from its substrate. Acts as a key repressor of the EIF2AK3/PERK and ERN1/IRE1-mediated unfolded protein response (UPR). In the unstressed endoplasmic reticulum, recruited by DNAJB9/ERdj4 to the luminal region of ERN1/IRE1, leading to disrupt the dimerization of ERN1/IRE1, thereby inactivating ERN1/IRE1. Also binds and inactivates EIF2AK3/PERK in unstressed cells. Accumulation of misfolded protein in the endoplasmic reticulum causes release of HSPA5/BiP from ERN1/IRE1 and EIF2AK3/PERK, allowing their homodimerization and subsequent activation. Plays an auxiliary role in post-translational transport of small presecretory proteins across endoplasmic reticulum (ER). May function as an allosteric modulator for SEC61 channel-forming translocon complex, likely cooperating with SEC62 to enable the productive insertion of these precursors into SEC61 channel. Appears to specifically regulate translocation of precursors having inhibitory residues in their mature region that weaken channel gating. May also play a role in apoptosis and cell proliferation. Its function is as follows. (Microbial infection) Plays an important role in viral binding to the host cell membrane and entry for several flaviruses such as Dengue virus, Zika virus and Japanese encephalitis virus. Acts as a component of the cellular receptor for Dengue virus serotype 2/DENV-2 on human liver cells. In terms of biological role, (Microbial infection) Acts as a receptor for CotH proteins expressed by fungi of the order mucorales, the causative agent of mucormycosis, which plays an important role in epithelial cell invasion by the fungi. Acts as a receptor for R.delemar CotH3 in nasal epithelial cells, which may be an early step in rhinoorbital/cerebral mucormycosis (RCM) disease progression. The sequence is that of Endoplasmic reticulum chaperone BiP from Homo sapiens (Human).